Here is a 504-residue protein sequence, read N- to C-terminus: Ribosomal protein uS12 methylthiotransferase RimO (504 aa).

The MTTase N-terminal domain occupies 21–131 (KRVGFISLGC…VMGHVRELLP (111 aa)). [4Fe-4S] cluster-binding residues include cysteine 30, cysteine 66, cysteine 95, cysteine 186, cysteine 190, and cysteine 193. One can recognise a Radical SAM core domain in the interval 172-408 (LTPRHYAYVK…MEVAQRISTE (237 aa)). One can recognise a TRAM domain in the interval 411–487 (SEKVGRVMDV…EYDLFGEVIE (77 aa)).

Belongs to the methylthiotransferase family. RimO subfamily. [4Fe-4S] cluster is required as a cofactor.

The protein localises to the cytoplasm. It catalyses the reaction L-aspartate(89)-[ribosomal protein uS12]-hydrogen + (sulfur carrier)-SH + AH2 + 2 S-adenosyl-L-methionine = 3-methylsulfanyl-L-aspartate(89)-[ribosomal protein uS12]-hydrogen + (sulfur carrier)-H + 5'-deoxyadenosine + L-methionine + A + S-adenosyl-L-homocysteine + 2 H(+). In terms of biological role, catalyzes the methylthiolation of an aspartic acid residue of ribosomal protein uS12. The protein is Ribosomal protein uS12 methylthiotransferase RimO of Deinococcus radiodurans (strain ATCC 13939 / DSM 20539 / JCM 16871 / CCUG 27074 / LMG 4051 / NBRC 15346 / NCIMB 9279 / VKM B-1422 / R1).